Reading from the N-terminus, the 179-residue chain is MQKAVVLDEQAIRRALTRIAHEIIERNKGIDDCVLIGIKTRGIYLAKRLAERIEQIEGKAVPVGELDITLYRDDLTVKTIDHEPLVKGTDVPFDVTNKKVILVDDVLFTGRTVRAAMDAVMDLGRPAQIQLAVLVDRGHRELPIRADFVGKNIPTSSSELIVVELTEVDQLDQVSIHEK.

A PRPP-binding motif is present at residues 100–112 (VILVDDVLFTGRT).

Belongs to the purine/pyrimidine phosphoribosyltransferase family. PyrR subfamily. In terms of assembly, homodimer and homohexamer; in equilibrium.

It catalyses the reaction UMP + diphosphate = 5-phospho-alpha-D-ribose 1-diphosphate + uracil. In terms of biological role, regulates transcriptional attenuation of the pyrimidine nucleotide (pyr) operon by binding in a uridine-dependent manner to specific sites on pyr mRNA. This disrupts an antiterminator hairpin in the RNA and favors formation of a downstream transcription terminator, leading to a reduced expression of downstream genes. Also displays a weak uracil phosphoribosyltransferase activity which is not physiologically significant. The protein is Bifunctional protein PyrR of Geobacillus sp. (strain WCH70).